The following is a 261-amino-acid chain: Cytochrome c oxidase subunit 3 (261 aa).

The Mitochondrial matrix segment spans residues Met1 to Pro15. Residues Trp16–Trp34 form a helical membrane-spanning segment. Over Phe35–Thr40 the chain is Mitochondrial intermembrane. Residues Thr41–Thr66 traverse the membrane as a helical segment. Over Phe67 to Thr72 the chain is Mitochondrial matrix. The chain crosses the membrane as a helical span at residues Pro73–Ser105. Residues Leu106–Glu128 are Mitochondrial intermembrane-facing. A helical membrane pass occupies residues Val129 to Met152. The Mitochondrial matrix segment spans residues Glu153–Glu155. Residues Arg156 to Glu183 form a helical membrane-spanning segment. Over Ala184 to Asp190 the chain is Mitochondrial intermembrane. Residues Gly191–Ile223 form a helical membrane-spanning segment. The Mitochondrial matrix portion of the chain corresponds to Gln224–His232. The chain crosses the membrane as a helical span at residues Phe233–Ile256. The Mitochondrial intermembrane segment spans residues Tyr257–Ser261.

This sequence belongs to the cytochrome c oxidase subunit 3 family. Component of the cytochrome c oxidase (complex IV, CIV), a multisubunit enzyme composed of 14 subunits. The complex is composed of a catalytic core of 3 subunits MT-CO1, MT-CO2 and MT-CO3, encoded in the mitochondrial DNA, and 11 supernumerary subunits COX4I, COX5A, COX5B, COX6A, COX6B, COX6C, COX7A, COX7B, COX7C, COX8 and NDUFA4, which are encoded in the nuclear genome. The complex exists as a monomer or a dimer and forms supercomplexes (SCs) in the inner mitochondrial membrane with NADH-ubiquinone oxidoreductase (complex I, CI) and ubiquinol-cytochrome c oxidoreductase (cytochrome b-c1 complex, complex III, CIII), resulting in different assemblies (supercomplex SCI(1)III(2)IV(1) and megacomplex MCI(2)III(2)IV(2)).

It localises to the mitochondrion inner membrane. The enzyme catalyses 4 Fe(II)-[cytochrome c] + O2 + 8 H(+)(in) = 4 Fe(III)-[cytochrome c] + 2 H2O + 4 H(+)(out). Component of the cytochrome c oxidase, the last enzyme in the mitochondrial electron transport chain which drives oxidative phosphorylation. The respiratory chain contains 3 multisubunit complexes succinate dehydrogenase (complex II, CII), ubiquinol-cytochrome c oxidoreductase (cytochrome b-c1 complex, complex III, CIII) and cytochrome c oxidase (complex IV, CIV), that cooperate to transfer electrons derived from NADH and succinate to molecular oxygen, creating an electrochemical gradient over the inner membrane that drives transmembrane transport and the ATP synthase. Cytochrome c oxidase is the component of the respiratory chain that catalyzes the reduction of oxygen to water. Electrons originating from reduced cytochrome c in the intermembrane space (IMS) are transferred via the dinuclear copper A center (CU(A)) of subunit 2 and heme A of subunit 1 to the active site in subunit 1, a binuclear center (BNC) formed by heme A3 and copper B (CU(B)). The BNC reduces molecular oxygen to 2 water molecules using 4 electrons from cytochrome c in the IMS and 4 protons from the mitochondrial matrix. In Cyprinus carpio (Common carp), this protein is Cytochrome c oxidase subunit 3 (mt-co3).